We begin with the raw amino-acid sequence, 280 residues long: Dual adapter for phosphotyrosine and 3-phosphotyrosine and 3-phosphoinositide (280 aa).

Positions 1-20 are disordered; it reads MGRAELLEGKMSTQDPSDLW. In terms of domain architecture, SH2 spans 35 to 129; the sequence is WYHGNLTRHA…GTLMVLKHPY (95 aa). A Phosphotyrosine modification is found at Tyr-139. Ser-141 carries the phosphoserine modification. The PH domain occupies 164–259; it reads LGTKEGYLTK…WIKILRWKLS (96 aa).

As to quaternary structure, interacts with PtdIns(3,4,5)P3 and PLCG2. In vitro, interacts with PtdIns(3,4)P2. Post-translationally, phosphorylated on tyrosine residues. Highly expressed in placenta and lung, followed by brain, heart, kidney, liver, pancreas and skeletal muscle. Expressed by B-lymphocytes, but not T-lymphocytes or nonhematopoietic cells.

The protein localises to the cytoplasm. It localises to the membrane. May act as a B-cell-associated adapter that regulates B-cell antigen receptor (BCR)-signaling downstream of PI3K. This chain is Dual adapter for phosphotyrosine and 3-phosphotyrosine and 3-phosphoinositide (DAPP1), found in Homo sapiens (Human).